The primary structure comprises 332 residues: Arabinogalactan endo-beta-1,4-galactanase (332 aa).

Asn111 is a glycosylation site (N-linked (GlcNAc...) asparagine). Residue Glu135 is the Proton donor of the active site. Glu245 (nucleophile) is an active-site residue.

Belongs to the glycosyl hydrolase 53 family.

It catalyses the reaction The enzyme specifically hydrolyzes (1-&gt;4)-beta-D-galactosidic linkages in type I arabinogalactans.. The protein is Arabinogalactan endo-beta-1,4-galactanase of Thermothelomyces thermophilus (Myceliophthora thermophila).